The chain runs to 594 residues: UvrABC system protein C (594 aa).

The GIY-YIG domain occupies 14–91 (DQPGCYLMKD…IKKYDPKYNI (78 aa)). Positions 196–231 (KEVRSELEIKMYEASEKLEFERAKELRDQIAHIDAI) constitute a UVR domain.

This sequence belongs to the UvrC family. As to quaternary structure, interacts with UvrB in an incision complex.

It localises to the cytoplasm. In terms of biological role, the UvrABC repair system catalyzes the recognition and processing of DNA lesions. UvrC both incises the 5' and 3' sides of the lesion. The N-terminal half is responsible for the 3' incision and the C-terminal half is responsible for the 5' incision. This Bacillus cereus (strain G9842) protein is UvrABC system protein C.